We begin with the raw amino-acid sequence, 110 residues long: Small ribosomal subunit protein uS17 (110 aa).

It belongs to the universal ribosomal protein uS17 family. As to quaternary structure, part of the 30S ribosomal subunit.

In terms of biological role, one of the primary rRNA binding proteins, it binds specifically to the 5'-end of 16S ribosomal RNA. This Petrotoga mobilis (strain DSM 10674 / SJ95) protein is Small ribosomal subunit protein uS17.